The following is a 417-amino-acid chain: Tyrosine--tRNA ligase (417 aa).

Y34 is a binding site for L-tyrosine. The 'HIGH' region motif lies at 39–48 (PTAKSIHIGN). L-tyrosine-binding residues include Y165 and Q169. The short motif at 227–231 (KFGKS) is the 'KMSKS' region element. K230 lines the ATP pocket. Residues 349 to 416 (TDVVELLVKD…GKKKYFLAKV (68 aa)) enclose the S4 RNA-binding domain.

This sequence belongs to the class-I aminoacyl-tRNA synthetase family. TyrS type 1 subfamily. Homodimer.

The protein resides in the cytoplasm. It carries out the reaction tRNA(Tyr) + L-tyrosine + ATP = L-tyrosyl-tRNA(Tyr) + AMP + diphosphate + H(+). In terms of biological role, catalyzes the attachment of tyrosine to tRNA(Tyr) in a two-step reaction: tyrosine is first activated by ATP to form Tyr-AMP and then transferred to the acceptor end of tRNA(Tyr). This Oenococcus oeni (strain ATCC BAA-331 / PSU-1) protein is Tyrosine--tRNA ligase.